The primary structure comprises 31 residues: Cyclotide vpub-B (31 aa).

A cross-link (cyclopeptide (Gly-Asn)) is located at residues 1-31 (GIIPCGESCVFIPCITSVVGCSCKSKVCYKN). Disulfide bonds link C5–C21, C9–C23, and C14–C28.

It belongs to the cyclotide family. Bracelet subfamily. This is a cyclic peptide.

In terms of biological role, probably participates in a plant defense mechanism. In Viola pubescens (Downy yellow violet), this protein is Cyclotide vpub-B.